The following is a 280-amino-acid chain: Pantothenate synthetase (280 aa).

An ATP-binding site is contributed by 31-38 (MGNLHVGH). Histidine 38 (proton donor) is an active-site residue. Position 62 (glutamine 62) interacts with (R)-pantoate. Glutamine 62 is a beta-alanine binding site. 150-153 (GKKD) provides a ligand contact to ATP. (R)-pantoate is bound at residue glutamine 156. ATP is bound by residues valine 179 and 187–190 (MSSR).

This sequence belongs to the pantothenate synthetase family. As to quaternary structure, homodimer.

Its subcellular location is the cytoplasm. The enzyme catalyses (R)-pantoate + beta-alanine + ATP = (R)-pantothenate + AMP + diphosphate + H(+). It functions in the pathway cofactor biosynthesis; (R)-pantothenate biosynthesis; (R)-pantothenate from (R)-pantoate and beta-alanine: step 1/1. Its function is as follows. Catalyzes the condensation of pantoate with beta-alanine in an ATP-dependent reaction via a pantoyl-adenylate intermediate. The polypeptide is Pantothenate synthetase (Xanthomonas oryzae pv. oryzae (strain MAFF 311018)).